Reading from the N-terminus, the 95-residue chain is Aspartyl/glutamyl-tRNA(Asn/Gln) amidotransferase subunit C (95 aa).

The protein belongs to the GatC family. As to quaternary structure, heterotrimer of A, B and C subunits.

The catalysed reaction is L-glutamyl-tRNA(Gln) + L-glutamine + ATP + H2O = L-glutaminyl-tRNA(Gln) + L-glutamate + ADP + phosphate + H(+). It catalyses the reaction L-aspartyl-tRNA(Asn) + L-glutamine + ATP + H2O = L-asparaginyl-tRNA(Asn) + L-glutamate + ADP + phosphate + 2 H(+). Its function is as follows. Allows the formation of correctly charged Asn-tRNA(Asn) or Gln-tRNA(Gln) through the transamidation of misacylated Asp-tRNA(Asn) or Glu-tRNA(Gln) in organisms which lack either or both of asparaginyl-tRNA or glutaminyl-tRNA synthetases. The reaction takes place in the presence of glutamine and ATP through an activated phospho-Asp-tRNA(Asn) or phospho-Glu-tRNA(Gln). The polypeptide is Aspartyl/glutamyl-tRNA(Asn/Gln) amidotransferase subunit C (Geobacter sp. (strain M21)).